The primary structure comprises 154 residues: Transcriptional repressor NrdR (154 aa).

The segment at 3-34 (CPTCKYNGTRVVDSRPADDGNSIRRRRECEKC) is a zinc-finger region. Residues 49–139 (LIVVKKDGAR…VYRQFKDISV (91 aa)) form the ATP-cone domain.

This sequence belongs to the NrdR family. It depends on Zn(2+) as a cofactor.

Negatively regulates transcription of bacterial ribonucleotide reductase nrd genes and operons by binding to NrdR-boxes. The polypeptide is Transcriptional repressor NrdR (Listeria welshimeri serovar 6b (strain ATCC 35897 / DSM 20650 / CCUG 15529 / CIP 8149 / NCTC 11857 / SLCC 5334 / V8)).